The primary structure comprises 410 residues: MRGIIKGVSNDGLGVLGEVLVPFAYPGDVVEVISTRERFGRTIARDFKLVKSSPIRVPGKCRYFGRCGGCLWQGLKYREQLKLKEEIFKRVTGVEAEIKGSPRIWFFRNISNFIVTVNGIGFKEFGMPRTVVSVDECPVFSERTKLYIRAMKRFLRETGLNPWNWKNGDVHYLQVREGKFTGEVMINVIAHIPPSGREELTEAFGFADSVYWSLKRDKRDDPKGIPTLIKGNEFIRESIEGLVYLIHPSTFFQTNSYALPILLKAVESFAEGSKVLDLYSGVGTFSLYLAKKGFEVTGVEVNEESVRVAKKSAEVNSLDVSFIPGRAEDAKLKGYETLIVDPPRKGLKDFSKRIAKEGPENLIYVSCNPSKFVLDYRNYLSKAYKIEDAVLIDMFPHTPHVEAVVKLRRR.

[4Fe-4S] cluster-binding residues include cysteine 61, cysteine 67, cysteine 70, and cysteine 137. 4 residues coordinate S-adenosyl-L-methionine: glutamine 253, tyrosine 279, glutamate 300, and aspartate 341. Residue cysteine 367 is the Nucleophile of the active site.

It belongs to the class I-like SAM-binding methyltransferase superfamily. RNA M5U methyltransferase family.

It carries out the reaction uridine(747) in 23S rRNA + S-adenosyl-L-methionine = 5-methyluridine(747) in 23S rRNA + S-adenosyl-L-homocysteine + H(+). With respect to regulation, activated by magnesium ions. Its function is as follows. Catalyzes the formation of 5-methyl-uridine at position equivalent to 747 (m5U747) in 23S rRNA (m5U859 in the P.abyssi numbering). The sequence is that of 23S rRNA (uracil(747)-C(5))-methyltransferase from Pyrococcus abyssi (strain GE5 / Orsay).